A 189-amino-acid chain; its full sequence is Small ribosomal subunit protein uS5 (189 aa).

The region spanning 22-85 is the S5 DRBM domain; sequence FVDKLVAINR…ESAKRDLIFV (64 aa).

The protein belongs to the universal ribosomal protein uS5 family. Part of the 30S ribosomal subunit. Contacts proteins S4 and S8.

Its function is as follows. With S4 and S12 plays an important role in translational accuracy. Functionally, located at the back of the 30S subunit body where it stabilizes the conformation of the head with respect to the body. The chain is Small ribosomal subunit protein uS5 from Allorhizobium ampelinum (strain ATCC BAA-846 / DSM 112012 / S4) (Agrobacterium vitis (strain S4)).